The sequence spans 198 residues: Glycerol-3-phosphate acyltransferase (198 aa).

4 helical membrane-spanning segments follow: residues 3-23 (VEWL…AVIV), 81-101 (LFAA…FFQF), 113-133 (VLLG…IGVA), and 153-175 (YVWL…MLLV).

Belongs to the PlsY family. Probably interacts with PlsX.

The protein localises to the cell inner membrane. It carries out the reaction an acyl phosphate + sn-glycerol 3-phosphate = a 1-acyl-sn-glycero-3-phosphate + phosphate. The protein operates within lipid metabolism; phospholipid metabolism. Its function is as follows. Catalyzes the transfer of an acyl group from acyl-phosphate (acyl-PO(4)) to glycerol-3-phosphate (G3P) to form lysophosphatidic acid (LPA). This enzyme utilizes acyl-phosphate as fatty acyl donor, but not acyl-CoA or acyl-ACP. The sequence is that of Glycerol-3-phosphate acyltransferase from Methylococcus capsulatus (strain ATCC 33009 / NCIMB 11132 / Bath).